Consider the following 274-residue polypeptide: MLPVAALSGPFAPVLSATSRGVXXXXXXXXXXXXXATPEPPVLDPKRPILSRESLSGQAARRPLVASVGLNVPASVRYSHTDIKVPDFSDYRRSEVLDKTKSSRESSDARKGFSYLVTAATAVGVTYAAKSIVTQFVSSMSASADVLAMSKIEIKLSDIPEGKNMAFKWRGKPLFVRHRTQKEIEQEAAVELSQLRDPQHDLDRVKKPEWMILIGVCTHLGCVPIANAGDFGGYYCPCHGSHYDASGRIRKGPAPLNLEVPTYEFTGDDMVIVG.

Residues 79 to 103 are Mitochondrial matrix-facing; that stretch reads SHTDIKVPDFSDYRRSEVLDKTKSS. Residues 104–140 form a helical membrane-spanning segment; sequence RESSDARKGFSYLVTAATAVGVTYAAKSIVTQFVSSM. The Mitochondrial intermembrane portion of the chain corresponds to 141-274; that stretch reads SASADVLAMS…FTGDDMVIVG (134 aa). The region spanning 187–272 is the Rieske domain; it reads EAAVELSQLR…YEFTGDDMVI (86 aa). [2Fe-2S] cluster contacts are provided by Cys-217, His-219, Cys-236, His-239, and Ser-241. Residues Cys-222 and Cys-238 are joined by a disulfide bond.

This sequence belongs to the Rieske iron-sulfur protein family. As to quaternary structure, component of the ubiquinol-cytochrome c oxidoreductase (cytochrome b-c1 complex, complex III, CIII), a multisubunit enzyme composed of 11 subunits. The complex is composed of 3 respiratory subunits cytochrome b, cytochrome c1 and Rieske protein UQCRFS1, 2 core protein subunits UQCRC1/QCR1 and UQCRC2/QCR2, and 6 low-molecular weight protein subunits UQCRH/QCR6, UQCRB/QCR7, UQCRQ/QCR8, UQCR10/QCR9, UQCR11/QCR10 and subunit 9, the cleavage product of Rieske protein UQCRFS1. The complex exists as an obligatory dimer and forms supercomplexes (SCs) in the inner mitochondrial membrane with NADH-ubiquinone oxidoreductase (complex I, CI) and cytochrome c oxidase (complex IV, CIV), resulting in different assemblies (supercomplex SCI(1)III(2)IV(1) and megacomplex MCI(2)III(2)IV(2)). Incorporation of the Rieske protein UQCRFS1 is the penultimate step in complex III assembly. Interacts with TTC19, which is involved in the clearance of UQCRFS1 fragments. Component of the ubiquinol-cytochrome c oxidoreductase (cytochrome b-c1 complex, complex III, CIII). Subunit 9 corresponds to the mitochondrial targeting sequence (MTS) of Rieske protein UQCRFS1. It is retained after processing and incorporated inside complex III, where it remains bound to the complex and localizes between the 2 core subunits UQCRC1/QCR1 and UQCRC2/QCR2. Requires [2Fe-2S] cluster as cofactor. In terms of processing, proteolytic processing is necessary for the correct insertion of UQCRFS1 in the complex III dimer. Several fragments are generated during UQCRFS1 insertion, most probably due to the endogenous matrix-processing peptidase (MPP) activity of the 2 core protein subunits UQCRC1/QCR1 and UQCRC2/QCR2, which are homologous to the 2 mitochondrial-processing peptidase (MPP) subunits beta-MPP and alpha-MPP respectively. The action of the protease is also necessary for the clearance of the UQCRFS1 fragments.

The protein resides in the mitochondrion inner membrane. It carries out the reaction a quinol + 2 Fe(III)-[cytochrome c](out) = a quinone + 2 Fe(II)-[cytochrome c](out) + 2 H(+)(out). Its function is as follows. Component of the ubiquinol-cytochrome c oxidoreductase, a multisubunit transmembrane complex that is part of the mitochondrial electron transport chain which drives oxidative phosphorylation. The respiratory chain contains 3 multisubunit complexes succinate dehydrogenase (complex II, CII), ubiquinol-cytochrome c oxidoreductase (cytochrome b-c1 complex, complex III, CIII) and cytochrome c oxidase (complex IV, CIV), that cooperate to transfer electrons derived from NADH and succinate to molecular oxygen, creating an electrochemical gradient over the inner membrane that drives transmembrane transport and the ATP synthase. The cytochrome b-c1 complex catalyzes electron transfer from ubiquinol to cytochrome c, linking this redox reaction to translocation of protons across the mitochondrial inner membrane, with protons being carried across the membrane as hydrogens on the quinol. In the process called Q cycle, 2 protons are consumed from the matrix, 4 protons are released into the intermembrane space and 2 electrons are passed to cytochrome c. The Rieske protein is a catalytic core subunit containing a [2Fe-2S] iron-sulfur cluster. It cycles between 2 conformational states during catalysis to transfer electrons from the quinol bound in the Q(0) site in cytochrome b to cytochrome c1. Incorporation of UQCRFS1 is the penultimate step in complex III assembly. In terms of biological role, component of the ubiquinol-cytochrome c oxidoreductase (cytochrome b-c1 complex, complex III, CIII). UQCRFS1 undergoes proteolytic processing once it is incorporated in the complex III dimer. One of the fragments, called subunit 9, corresponds to its mitochondrial targeting sequence (MTS). The proteolytic processing is necessary for the correct insertion of UQCRFS1 in the complex III dimer, but the persistence of UQCRFS1-derived fragments may prevent newly imported UQCRFS1 to be processed and assembled into complex III and is detrimental for the complex III structure and function. This chain is Cytochrome b-c1 complex subunit Rieske, mitochondrial (UQCRFS1), found in Lagothrix lagotricha (Brown woolly monkey).